The following is a 686-amino-acid chain: Kinesin light chain (686 aa).

2 disordered regions span residues 1 to 23 (MSGSKLSTPNNSGGGQGNLSQEQ) and 158 to 204 (KYDE…SVSA). Residues 20–160 (SQEQIITGTR…EYMNSIKKYD (141 aa)) adopt a coiled-coil conformation. 6 TPR repeats span residues 215-248 (LRTLHNLVIQYASQSRYEVAVPLCKQALEDLEKT), 257-290 (ATMLNILALVYRDQNKYKEAGNLLHDALAIREKT), 299-332 (AATLNNLAVLYGKRGKYKEAEPLCKRALEIREKV), 341-374 (AKQLNNLALLCQNQGKYEEVEWYYQRALEIYEKK), 383-416 (AKTKNNLAAAYLKQGKYKAAETLYKQVLTRAHER), and 472-505 (TTTLKNLGALYRRQGKYDAAEILEECAMKSRRNA). Disordered stretches follow at residues 520–558 (QDLSTDVPRSEAMAKERHHRRSSGTPRHGSTESVSYEKT) and 586–686 (GYVE…SGNF). Residues 675 to 686 (DNLSSRRQSGNF) show a composition bias toward polar residues.

The protein belongs to the kinesin light chain family. Oligomeric complex composed of two heavy chains and two light chains. Phosphorylation may modulate the process of mechanochemical coupling.

The protein resides in the cytoplasm. Its subcellular location is the cytoskeleton. In terms of biological role, kinesin is a microtubule-associated force-producing protein that may play a role in organelle transport. The light chain may function in coupling of cargo to the heavy chain or in the modulation of its ATPase activity. The chain is Kinesin light chain from Strongylocentrotus purpuratus (Purple sea urchin).